The following is an 871-amino-acid chain: Valine--tRNA ligase (871 aa).

The 'HIGH' region signature appears at 47–57 (PNVTGRLHIGH). The 'KMSKS' region motif lies at 534–538 (KMSKS). Residue K537 coordinates ATP. The stretch at 805 to 871 (DLTPILNRLN…IEEELARLTR (67 aa)) forms a coiled coil.

Belongs to the class-I aminoacyl-tRNA synthetase family. ValS type 1 subfamily. As to quaternary structure, monomer.

The protein resides in the cytoplasm. It catalyses the reaction tRNA(Val) + L-valine + ATP = L-valyl-tRNA(Val) + AMP + diphosphate. Its function is as follows. Catalyzes the attachment of valine to tRNA(Val). As ValRS can inadvertently accommodate and process structurally similar amino acids such as threonine, to avoid such errors, it has a 'posttransfer' editing activity that hydrolyzes mischarged Thr-tRNA(Val) in a tRNA-dependent manner. The protein is Valine--tRNA ligase of Nitratiruptor sp. (strain SB155-2).